The following is a 282-amino-acid chain: MEMO1 family protein Msed_2139 (282 aa).

This sequence belongs to the MEMO1 family.

The protein is MEMO1 family protein Msed_2139 of Metallosphaera sedula (strain ATCC 51363 / DSM 5348 / JCM 9185 / NBRC 15509 / TH2).